Here is a 181-residue protein sequence, read N- to C-terminus: Large ribosomal subunit protein uL5 (181 aa).

The protein belongs to the universal ribosomal protein uL5 family. As to quaternary structure, part of the 50S ribosomal subunit; part of the 5S rRNA/L5/L18/L25 subcomplex. Contacts the 5S rRNA and the P site tRNA. Forms a bridge to the 30S subunit in the 70S ribosome.

In terms of biological role, this is one of the proteins that bind and probably mediate the attachment of the 5S RNA into the large ribosomal subunit, where it forms part of the central protuberance. In the 70S ribosome it contacts protein S13 of the 30S subunit (bridge B1b), connecting the 2 subunits; this bridge is implicated in subunit movement. Contacts the P site tRNA; the 5S rRNA and some of its associated proteins might help stabilize positioning of ribosome-bound tRNAs. This chain is Large ribosomal subunit protein uL5, found in Rickettsia canadensis (strain McKiel).